The sequence spans 254 residues: 4-hydroxy-tetrahydrodipicolinate reductase (254 aa).

NAD(+) contacts are provided by residues 8–13 (GGSGRV), 87–89 (GTT), and 111–114 (ATNM). His143 serves as the catalytic Proton donor/acceptor. His144 is a (S)-2,3,4,5-tetrahydrodipicolinate binding site. The active-site Proton donor is the Lys147. Position 153-154 (153-154 (GT)) interacts with (S)-2,3,4,5-tetrahydrodipicolinate.

Belongs to the DapB family.

Its subcellular location is the cytoplasm. It catalyses the reaction (S)-2,3,4,5-tetrahydrodipicolinate + NAD(+) + H2O = (2S,4S)-4-hydroxy-2,3,4,5-tetrahydrodipicolinate + NADH + H(+). It carries out the reaction (S)-2,3,4,5-tetrahydrodipicolinate + NADP(+) + H2O = (2S,4S)-4-hydroxy-2,3,4,5-tetrahydrodipicolinate + NADPH + H(+). The protein operates within amino-acid biosynthesis; L-lysine biosynthesis via DAP pathway; (S)-tetrahydrodipicolinate from L-aspartate: step 4/4. In terms of biological role, catalyzes the conversion of 4-hydroxy-tetrahydrodipicolinate (HTPA) to tetrahydrodipicolinate. This Nitratiruptor sp. (strain SB155-2) protein is 4-hydroxy-tetrahydrodipicolinate reductase.